A 124-amino-acid chain; its full sequence is Fluoride-specific ion channel FluC (124 aa).

The next 4 helical transmembrane spans lie at 1 to 21 (MIGVTLAVAVGGALGCLLRFA), 34 to 54 (FYAATLAVNIAGCLLIGYLYG), 62 to 82 (VPLALRAGLIAGFLGGLTTFS), and 101 to 121 (FSYLAFSVLGGLLATWAGLIL). Na(+)-binding residues include G76 and T79.

This sequence belongs to the fluoride channel Fluc/FEX (TC 1.A.43) family.

Its subcellular location is the cell inner membrane. The enzyme catalyses fluoride(in) = fluoride(out). With respect to regulation, na(+) is not transported, but it plays an essential structural role and its presence is essential for fluoride channel function. In terms of biological role, fluoride-specific ion channel. Important for reducing fluoride concentration in the cell, thus reducing its toxicity. The polypeptide is Fluoride-specific ion channel FluC (Azotobacter vinelandii (strain DJ / ATCC BAA-1303)).